A 751-amino-acid chain; its full sequence is Probable alpha-galactosidase C (751 aa).

The first 27 residues, 1–27 (MFGSPKRAALAAASLLAIFGNGPSVMA), serve as a signal peptide directing secretion. N-linked (GlcNAc...) asparagine glycans are attached at residues Asn49, Asn57, Asn162, Asn186, Asn194, Asn366, Asn433, Asn452, and Asn500. Asp510 (nucleophile) is an active-site residue. The Proton donor role is filled by Asp572. The N-linked (GlcNAc...) asparagine glycan is linked to Asn720.

It belongs to the glycosyl hydrolase 36 family. In terms of assembly, homotetramer. Requires Mg(2+) as cofactor. The cofactor is NAD(+).

It is found in the secreted. It carries out the reaction Hydrolysis of terminal, non-reducing alpha-D-galactose residues in alpha-D-galactosides, including galactose oligosaccharides, galactomannans and galactolipids.. In terms of biological role, hydrolyzes a variety of simple alpha-D-galactoside as well as more complex molecules such as oligosaccharides and polysaccharides. The protein is Probable alpha-galactosidase C (aglC) of Aspergillus flavus (strain ATCC 200026 / FGSC A1120 / IAM 13836 / NRRL 3357 / JCM 12722 / SRRC 167).